We begin with the raw amino-acid sequence, 147 residues long: Transthyretin (147 aa).

Positions 1–20 (MASHRLLLLCLAGLVFVSEA) are cleaved as a signal peptide. Cys30 is modified (sulfocysteine). Lys35 provides a ligand contact to L-thyroxine. Residue Glu62 is modified to 4-carboxyglutamate. Ser72 is modified (phosphoserine). L-thyroxine is bound at residue Glu74. Asn118 carries N-linked (GlcNAc...) asparagine glycosylation. Ser137 serves as a coordination point for L-thyroxine.

Belongs to the transthyretin family. Homotetramer. Dimer of dimers. In the homotetramer, subunits assemble around a central channel that can accommodate two ligand molecules. Interacts with RBP4. In terms of processing, sulfonation of the reactive cysteine Cys-30 enhances the stability of the native conformation of TTR, avoiding misassembly of the protein leading to amyloid formation. Detected in liver.

The protein localises to the secreted. In terms of biological role, thyroid hormone-binding protein. Probably transports thyroxine from the bloodstream to the brain. The polypeptide is Transthyretin (TTR) (Pongo abelii (Sumatran orangutan)).